A 107-amino-acid chain; its full sequence is uncharacterized protein (107 aa).

An N-terminal signal peptide occupies residues 1–20 (MYIKGRLIFFFVVLVIALCS).

This is an uncharacterized protein from Listeria monocytogenes serovar 1/2a (strain ATCC BAA-679 / EGD-e).